A 31-amino-acid polypeptide reads, in one-letter code: Aspartate racemase (31 aa).

The tract at residues 1-31 is disordered; it reads PVAPEYLFKKEEDKGANKEEEEVAPELGIRA. Residues 7–18 show a composition bias toward basic and acidic residues; it reads LFKKEEDKGANK.

Belongs to the aspartate/glutamate racemases family. The cofactor is pyridoxal 5'-phosphate.

The catalysed reaction is L-aspartate = D-aspartate. With respect to regulation, inhibited by hydroxylamine, aminooxyacetate, phenylhydrazine and sodium borohydride. Functionally, highly specific toward aspartate and entirely inactive on glutamate, alanine and serine. The polypeptide is Aspartate racemase (Anadara broughtonii (Blood clam)).